Consider the following 114-residue polypeptide: MPKDSGPLVPLHWLGFGYAALVASGGIIGYAKAGSVPSLAAGLLFGGLAGLGSYQLSQDPKNIWLFLVTSGTLAGIMGMRFYNSRKFMPAGLIAGASLLMVVKLGISALSKPHQ.

4 consecutive transmembrane segments (helical) span residues 8-28 (LVPLHWLGFGYAALVASGGII), 33-53 (AGSVPSLAAGLLFGGLAGLGS), 62-82 (NIWLFLVTSGTLAGIMGMRFY), and 87-107 (FMPAGLIAGASLLMVVKLGIS).

The protein resides in the mitochondrion membrane. Functionally, required for normal heme biosynthesis. The polypeptide is Transmembrane protein 14C (TMEM14C) (Bos taurus (Bovine)).